The primary structure comprises 484 residues: uncharacterized protein (484 aa).

Over residues M1–T14 the composition is skewed to low complexity. The segment at M1–T32 is disordered. Positions V15–T32 are enriched in polar residues. At K305 the chain carries N6-(pyridoxal phosphate)lysine.

This sequence belongs to the class-III pyridoxal-phosphate-dependent aminotransferase family. It depends on pyridoxal 5'-phosphate as a cofactor.

This is an uncharacterized protein from Schizosaccharomyces pombe (strain 972 / ATCC 24843) (Fission yeast).